Reading from the N-terminus, the 407-residue chain is Imidazolonepropionase (407 aa).

Residues histidine 74 and histidine 76 each coordinate Fe(3+). The Zn(2+) site is built by histidine 74 and histidine 76. 3 residues coordinate 4-imidazolone-5-propanoate: arginine 83, tyrosine 146, and histidine 179. An N-formimidoyl-L-glutamate-binding site is contributed by tyrosine 146. Histidine 244 contributes to the Fe(3+) binding site. A Zn(2+)-binding site is contributed by histidine 244. Position 247 (glutamine 247) interacts with 4-imidazolone-5-propanoate. Aspartate 319 serves as a coordination point for Fe(3+). Aspartate 319 is a binding site for Zn(2+). N-formimidoyl-L-glutamate is bound by residues asparagine 321 and glycine 323. Threonine 324 contacts 4-imidazolone-5-propanoate.

Belongs to the metallo-dependent hydrolases superfamily. HutI family. Zn(2+) is required as a cofactor. Requires Fe(3+) as cofactor.

It localises to the cytoplasm. It carries out the reaction 4-imidazolone-5-propanoate + H2O = N-formimidoyl-L-glutamate. Its pathway is amino-acid degradation; L-histidine degradation into L-glutamate; N-formimidoyl-L-glutamate from L-histidine: step 3/3. In terms of biological role, catalyzes the hydrolytic cleavage of the carbon-nitrogen bond in imidazolone-5-propanoate to yield N-formimidoyl-L-glutamate. It is the third step in the universal histidine degradation pathway. The polypeptide is Imidazolonepropionase (Salmonella agona (strain SL483)).